Consider the following 179-residue polypeptide: UPF0227 protein Shewmr7_1806 (179 aa).

This sequence belongs to the UPF0227 family.

The protein is UPF0227 protein Shewmr7_1806 of Shewanella sp. (strain MR-7).